We begin with the raw amino-acid sequence, 230 residues long: Interleukin-22 receptor subunit alpha-2 (230 aa).

The signal sequence occupies residues 1-20; that stretch reads MMPKHCLLGLLIILLSSATE. Fibronectin type-III domains lie at 29–128 and 129–230; these read TPQK…TKLD and PPVV…VHIP. 2 cysteine pairs are disulfide-bonded: Cys-77–Cys-85 and Cys-205–Cys-226.

This sequence belongs to the type II cytokine receptor family. In terms of tissue distribution, highly expressed in lymph nodes and at lower levels in lung, spleen, and thymus. Not expressed in kidney, liver and heart.

It is found in the secreted. In terms of biological role, receptor for IL22. Binds to IL22, prevents interaction with the functional IL-22R complex and blocks the activity of IL22 (in vitro). May play an important role as an IL22 antagonist in the regulation of inflammatory responses. This is Interleukin-22 receptor subunit alpha-2 (Il22ra2) from Mus musculus (Mouse).